A 327-amino-acid chain; its full sequence is Lipoyl synthase (327 aa).

Cys74, Cys79, Cys85, Cys100, Cys104, Cys107, and Ser314 together coordinate [4Fe-4S] cluster. Residues 86-303 (FSGGTATFMI…AEEGEKMGFK (218 aa)) form the Radical SAM core domain.

Belongs to the radical SAM superfamily. Lipoyl synthase family. It depends on [4Fe-4S] cluster as a cofactor.

It is found in the cytoplasm. The enzyme catalyses [[Fe-S] cluster scaffold protein carrying a second [4Fe-4S](2+) cluster] + N(6)-octanoyl-L-lysyl-[protein] + 2 oxidized [2Fe-2S]-[ferredoxin] + 2 S-adenosyl-L-methionine + 4 H(+) = [[Fe-S] cluster scaffold protein] + N(6)-[(R)-dihydrolipoyl]-L-lysyl-[protein] + 4 Fe(3+) + 2 hydrogen sulfide + 2 5'-deoxyadenosine + 2 L-methionine + 2 reduced [2Fe-2S]-[ferredoxin]. Its pathway is protein modification; protein lipoylation via endogenous pathway; protein N(6)-(lipoyl)lysine from octanoyl-[acyl-carrier-protein]: step 2/2. Its function is as follows. Catalyzes the radical-mediated insertion of two sulfur atoms into the C-6 and C-8 positions of the octanoyl moiety bound to the lipoyl domains of lipoate-dependent enzymes, thereby converting the octanoylated domains into lipoylated derivatives. This chain is Lipoyl synthase, found in Pseudomonas aeruginosa (strain LESB58).